The chain runs to 803 residues: Mechanosensitive cation channel TMEM63A (803 aa).

Residues 1–51 lie on the Extracellular side of the membrane; sequence MTDSPFLELWQSRTVAIRERLGIGDQPNDSYCYNSAKNSTVLQGVTFGGIP. The helical transmembrane segment at 52–74 threads the bilayer; it reads TVLFIDVSCFLFLIVVFSIIRRK. Residues 75 to 133 lie on the Cytoplasmic side of the membrane; that stretch reads FWDYGRIALVSEGNSESRFRRLSSSSSGQQDFESELGCCSWLTAIFRLHDDQILEWCGE. A helical transmembrane segment spans residues 134–166; it reads DAIHYLSFQRHIIFLLVVVSCLSLCIILPVNLS. The Extracellular segment spans residues 167–190; that stretch reads GDLLDKDPYSFGRTTIANLQTDNN. Residues 191-216 traverse the membrane as a helical segment; it reads LLWLHTIFAILYLILTVVFMRHHTQS. The Cytoplasmic segment spans residues 217 to 415; the sequence is IKYKEESLVR…CWKNLSIQGF (199 aa). The interval 218–413 is intracellular linker IL2; confers mechanosensitivity; sequence KYKEESLVRR…DICWKNLSIQ (196 aa). The chain crosses the membrane as a helical span at residues 416–443; it reads RWWFQWLGINFILFVGLFFLTTPSIILS. The Extracellular segment spans residues 444-461; it reads TMDKFNVTKPIHALNDPI. The helical transmembrane segment at 462–489 threads the bilayer; sequence ISQFFPTLLLWSFSALLPTIVCYSTLLE. The Cytoplasmic segment spans residues 490–494; that stretch reads SHWTK. The chain crosses the membrane as a helical span at residues 495–531; sequence SGENRIMMTKVYIFLIFMVLILPSLGLTSLDFFFRWL. At 532 to 553 the chain is on the extracellular side; sequence FDKTSSEASIRLECVFLPDQGA. The chain crosses the membrane as a helical span at residues 554 to 585; the sequence is FFVNYVIASAFIGNGMELLRLPGLILYTFRMV. Positions 554 to 585 are gating helix; it reads FFVNYVIASAFIGNGMELLRLPGLILYTFRMV. The Cytoplasmic portion of the chain corresponds to 586-605; the sequence is MAKTAADRRNVKQHQAFEYE. Residues 606–623 form a helical membrane-spanning segment; the sequence is FGAMYAWMLCVFTVIMAY. At 624 to 627 the chain is on the extracellular side; it reads SITC. A helical transmembrane segment spans residues 628–650; the sequence is PIIVPFGLIYILLKHMVDRHNLY. The Cytoplasmic portion of the chain corresponds to 651 to 660; sequence FAYLPAKLEK. A helical membrane pass occupies residues 661–688; sequence RIHFAAVNQALAAPILCLFWLYFFSFLR. Residues 689–693 are Extracellular-facing; it reads LGLKA. Residues 694–708 form a helical membrane-spanning segment; that stretch reads PLTLFTFLVLLLTIL. Topologically, residues 709-803 are cytoplasmic; the sequence is VCLAYTCFGC…DSVAAADQED (95 aa).

It belongs to the CSC1 (TC 1.A.17) family. In terms of assembly, (Microbial infection) Interacts with H.contortus GAL-1 (via domain galectin 1).

It is found in the lysosome membrane. The protein localises to the early endosome membrane. The protein resides in the cell membrane. It carries out the reaction Ca(2+)(in) = Ca(2+)(out). Functionally, mechanosensitive cation channel with low conductance and high activation threshold. In contrast to TMEM63B, does not show phospholipid scramblase activity. Acts as a regulator of lysosomal morphology by mediating lysosomal mechanosensitivity. Important for the baby's first breath and respiration throughout life. Upon lung inflation conducts cation currents in alveolar type 1 and 2 cells triggering lamellar body exocytosis and surfactant secretion into airspace. Also acts as an osmosensitive cation channel preferentially activated by hypotonic stress. (Microbial infection) Involved in the immunomodulatory effects exerted by H.contortus GAL-1 on host peripheral blood mononuclear cells to down-regulate host immune response. In Capra hircus (Goat), this protein is Mechanosensitive cation channel TMEM63A (TMEM63A).